The sequence spans 445 residues: GTPase Der (445 aa).

2 EngA-type G domains span residues 3–167 (PVIA…YAGQ) and 180–353 (IKIA…AAAM). Residues 9 to 16 (GRPNVGKS), 56 to 60 (DTGGF), 119 to 122 (NKAE), 186 to 193 (GRPNVGKS), 233 to 237 (DTAGL), and 298 to 301 (NKWD) contribute to the GTP site. The 85-residue stretch at 354-438 (SKLPTPKLTR…PLRIEFRSSN (85 aa)) folds into the KH-like domain.

It belongs to the TRAFAC class TrmE-Era-EngA-EngB-Septin-like GTPase superfamily. EngA (Der) GTPase family. As to quaternary structure, associates with the 50S ribosomal subunit.

Its function is as follows. GTPase that plays an essential role in the late steps of ribosome biogenesis. The sequence is that of GTPase Der from Burkholderia cenocepacia (strain ATCC BAA-245 / DSM 16553 / LMG 16656 / NCTC 13227 / J2315 / CF5610) (Burkholderia cepacia (strain J2315)).